We begin with the raw amino-acid sequence, 200 residues long: MAGIKLTHKLYQYYQLATSFLYAALLIRWLILMPLVGSRFLPGGIHEFLIYLMFYSSIMEVIWLLRFHGFKYGLLSRTFLKDLNFIYLVSVIHFYDDYEHALILKNASYSSFIISLSLSQAYCHWCKLFKRKGVKERTLVWKVNTFVTLPILYLSEFALLLLNIQVKNYHSTPTLDIINRVVLLAYFPVLLTAYKKLLTK.

Residues 1–15 (MAGIKLTHKLYQYYQ) lie on the Lumenal side of the membrane. A helical membrane pass occupies residues 16–36 (LATSFLYAALLIRWLILMPLV). Over 37-44 (GSRFLPGG) the chain is Cytoplasmic. Residues 45–65 (IHEFLIYLMFYSSIMEVIWLL) traverse the membrane as a helical segment. The Lumenal portion of the chain corresponds to 66 to 82 (RFHGFKYGLLSRTFLKD). A helical transmembrane segment spans residues 83–103 (LNFIYLVSVIHFYDDYEHALI). Residues 104–145 (LKNASYSSFIISLSLSQAYCHWCKLFKRKGVKERTLVWKVNT) are Cytoplasmic-facing. The chain crosses the membrane as a helical span at residues 146–166 (FVTLPILYLSEFALLLLNIQV). Residues 167 to 173 (KNYHSTP) are Lumenal-facing. The helical transmembrane segment at 174–194 (TLDIINRVVLLAYFPVLLTAY) threads the bilayer. Residues 195–200 (KKLLTK) lie on the Cytoplasmic side of the membrane.

As to quaternary structure, interacts with KRE6.

It localises to the endoplasmic reticulum membrane. Involved in the biosynthesis of (1-&gt;6)-beta-D-glucan polymers of the cell wall. Required for viability. Involved in maintaining chromosome stability. This is Beta-1,6-glucan synthesis-associated protein KEG1 (KEG1) from Saccharomyces cerevisiae (strain ATCC 204508 / S288c) (Baker's yeast).